A 382-amino-acid polypeptide reads, in one-letter code: Calcium/calmodulin-dependent protein kinase (382 aa).

In terms of domain architecture, Protein kinase spans 23-278 (YKFGRTLGAG…SKEALGHIWL (256 aa)). ATP contacts are provided by residues 29–37 (LGAGTYGVV) and Lys-50. Catalysis depends on Asp-142, which acts as the Proton acceptor. Residues 291-301 (ELEAYRRRARL) are calmodulin-binding. Disordered stretches follow at residues 318–344 (KEHE…GDGS) and 359–382 (QKQE…FSNA).

This sequence belongs to the protein kinase superfamily. CAMK Ser/Thr protein kinase family. CaMK subfamily.

The catalysed reaction is L-seryl-[protein] + ATP = O-phospho-L-seryl-[protein] + ADP + H(+). It catalyses the reaction L-threonyl-[protein] + ATP = O-phospho-L-threonyl-[protein] + ADP + H(+). This chain is Calcium/calmodulin-dependent protein kinase, found in Metarhizium anisopliae (Entomophthora anisopliae).